We begin with the raw amino-acid sequence, 248 residues long: Ubiquinone biosynthesis O-methyltransferase (248 aa).

S-adenosyl-L-methionine contacts are provided by Arg-41, Gly-72, Asp-93, and Met-136.

Belongs to the methyltransferase superfamily. UbiG/COQ3 family.

It catalyses the reaction a 3-demethylubiquinol + S-adenosyl-L-methionine = a ubiquinol + S-adenosyl-L-homocysteine + H(+). It carries out the reaction a 3-(all-trans-polyprenyl)benzene-1,2-diol + S-adenosyl-L-methionine = a 2-methoxy-6-(all-trans-polyprenyl)phenol + S-adenosyl-L-homocysteine + H(+). The protein operates within cofactor biosynthesis; ubiquinone biosynthesis. O-methyltransferase that catalyzes the 2 O-methylation steps in the ubiquinone biosynthetic pathway. The chain is Ubiquinone biosynthesis O-methyltransferase from Bartonella bacilliformis (strain ATCC 35685 / KC583 / Herrer 020/F12,63).